A 750-amino-acid polypeptide reads, in one-letter code: Rho GTPase-activating protein 9 (750 aa).

The region spanning 22 to 88 is the SH3 domain; the sequence is PRGSQLCALY…PAAYMIEESI (67 aa). 2 disordered regions span residues 120-187 and 242-319; these read ALPS…LMSE and WKPP…LLDD. The span at 163-180 shows a compositional bias: polar residues; sequence RSLSQEDLPSEASASTAG. In terms of domain architecture, WW spans 213–247; it reads LQRLDAWEQHLDPNSGRCFYINSLTGCKSWKPPRR. Polar residues-rich tracts occupy residues 251–270 and 291–300; these read ETNP…NDVL and GSLSLSQRTS. Residues 301 to 317 show a composition bias toward low complexity; that stretch reads QLDPPALQAPRPLPQLL. The 114-residue stretch at 322–435 folds into the PH domain; that stretch reads EVEKSGLLNM…WHRALRTVIE (114 aa). Lipid binding regions lie at residues 342–345, 397–399, and 432–669; these read RKNW, SSR, and TVIE…CLSQ. A compositionally biased stretch (basic and acidic residues) spans 446-462; that stretch reads EAPTGRDQGSGDRENPL. Residues 446 to 488 are disordered; sequence EAPTGRDQGSGDRENPLELRLSGSGPAELSAGEDEEEESELVS. Phosphoserine is present on S475. The segment covering 476 to 485 has biased composition (acidic residues); it reads AGEDEEEESE. A Phosphoserine modification is found at S500. A Rho-GAP domain is found at 542–749; sequence CQLESLCQRE…LMLTNFTSLF (208 aa).

Interacts with FASLG. As to expression, predominantly expressed in peripheral blood leukocytes, spleen, and thymus.

GTPase activator for the Rho-type GTPases by converting them to an inactive GDP-bound state. Has a substantial GAP activity toward CDC42 and RAC1 and less toward RHOA. Has a role in regulating adhesion of hematopoietic cells to the extracellular matrix. Binds phosphoinositides, and has the highest affinity for phosphatidylinositol 3,4,5-trisphosphate, followed by phosphatidylinositol 3,4-bisphosphate and phosphatidylinositol 4,5-bisphosphate. The chain is Rho GTPase-activating protein 9 (ARHGAP9) from Homo sapiens (Human).